We begin with the raw amino-acid sequence, 252 residues long: Imidazole glycerol phosphate synthase subunit HisF (252 aa).

Active-site residues include Asp-11 and Asp-130.

This sequence belongs to the HisA/HisF family. In terms of assembly, heterodimer of HisH and HisF.

The protein resides in the cytoplasm. It carries out the reaction 5-[(5-phospho-1-deoxy-D-ribulos-1-ylimino)methylamino]-1-(5-phospho-beta-D-ribosyl)imidazole-4-carboxamide + L-glutamine = D-erythro-1-(imidazol-4-yl)glycerol 3-phosphate + 5-amino-1-(5-phospho-beta-D-ribosyl)imidazole-4-carboxamide + L-glutamate + H(+). It participates in amino-acid biosynthesis; L-histidine biosynthesis; L-histidine from 5-phospho-alpha-D-ribose 1-diphosphate: step 5/9. In terms of biological role, IGPS catalyzes the conversion of PRFAR and glutamine to IGP, AICAR and glutamate. The HisF subunit catalyzes the cyclization activity that produces IGP and AICAR from PRFAR using the ammonia provided by the HisH subunit. The polypeptide is Imidazole glycerol phosphate synthase subunit HisF (Halothermothrix orenii (strain H 168 / OCM 544 / DSM 9562)).